Consider the following 412-residue polypeptide: MSNYSHSSNNPFLKVSTKEDKPSSFHKIAEDEEYEVTSPTDATFRASKNADNSAGGNNPLESGRAGESGDGIRFGRDPFGNFQGGAEGQDESSIDPNGFRPTGGPDHGFPNNYALGRRTSVSAESLNPTSAGSDSWTPPSHPKSEEQLARLKTAVSNNFLFSHLDDEQSRTVLDALVEKPIPAKDIKVISQGDAGDYFYIVEEGHFDVYINPSGSVQPGPDGAGTKISTIGPGGSFGELALMYNAPRAATIVSTEPKSTLWALDRITFRRILMDSAFQRRRMYEAFLEEVPLLSSLKPYERAKIADALDTIKFPAGEYIIKEGDPGDAFYLLESGEAEAFMEGVEEPVKSYKRGDYFGELALLDDKPRAASVRAKTEVKVAKLGRDGFKRLLGPVENIMRRTEYSSRPSTAT.

The segment covering 1-11 (MSNYSHSSNNP) has biased composition (polar residues). Residues 1–146 (MSNYSHSSNN…TPPSHPKSEE (146 aa)) form a disordered region. Residues 16-29 (STKEDKPSSFHKIA) are compositionally biased toward basic and acidic residues. The interval 23 to 159 (SSFHKIAEDE…RLKTAVSNNF (137 aa)) is dimerization and phosphorylation. Polar residues-rich tracts occupy residues 49–60 (NADNSAGGNNPL) and 119–138 (TSVSAESLNPTSAGSDSWTP). At S120 the chain carries Phosphoserine. 3',5'-cyclic AMP is bound by residues 160–291 (LFSH…EEVP), E238, R247, 292–405 (LLSS…TEYS), E359, and R368.

Belongs to the cAMP-dependent kinase regulatory chain family. Tetramer, composed of 2 regulatory (R) and 2 catalytic (C) subunits. In the presence of cAMP it dissociates into 2 active monomeric C subunits and an R dimer.

In Emericella nidulans (strain FGSC A4 / ATCC 38163 / CBS 112.46 / NRRL 194 / M139) (Aspergillus nidulans), this protein is cAMP-dependent protein kinase regulatory subunit (pkaR).